The sequence spans 577 residues: Arginine--tRNA ligase (577 aa).

A 'HIGH' region motif is present at residues 122–132 (PNVAKEMHVGH).

It belongs to the class-I aminoacyl-tRNA synthetase family. As to quaternary structure, monomer.

It is found in the cytoplasm. The enzyme catalyses tRNA(Arg) + L-arginine + ATP = L-arginyl-tRNA(Arg) + AMP + diphosphate. This is Arginine--tRNA ligase from Salmonella dublin (strain CT_02021853).